Here is a 264-residue protein sequence, read N- to C-terminus: Undecaprenyl-diphosphatase (264 aa).

The next 8 helical transmembrane spans lie at 7–27 (IVIP…PVSS), 45–65 (TKIL…LFFY), 86–106 (IHVL…YNKI), 109–129 (LFNP…LIIA), 145–165 (INLV…YPGF), 186–206 (VNFS…LDLI), 215–235 (LNIP…FLLI), and 244–264 (KVSL…IYFI).

It belongs to the UppP family.

It is found in the cell membrane. The catalysed reaction is di-trans,octa-cis-undecaprenyl diphosphate + H2O = di-trans,octa-cis-undecaprenyl phosphate + phosphate + H(+). Catalyzes the dephosphorylation of undecaprenyl diphosphate (UPP). Confers resistance to bacitracin. The polypeptide is Undecaprenyl-diphosphatase (Buchnera aphidicola subsp. Schizaphis graminum (strain Sg)).